A 927-amino-acid chain; its full sequence is Alpha-catenin-like protein hmp-1 (927 aa).

Coiled-coil stretches lie at residues 319 to 354 (TREN…RRDD) and 672 to 696 (QENQ…QIDI). A disordered region spans residues 901 to 927 (RNEIETGRDSDDEELDRRHQQRINGRL).

Belongs to the vinculin/alpha-catenin family. In terms of assembly, component of a core catenin-cadherin complex consisting of hmr-1, hmp-1 and hmp-2; the complex localizes to adherens junctions. May interact with hmp-2. As to expression, epidermal cells.

The protein resides in the cell junction. It localises to the adherens junction. The protein localises to the cytoplasm. Functionally, required for cell migration during body enclosure and cell shape changes during body elongation. Required for proper localization of other junctional components, such as pac-1. The sequence is that of Alpha-catenin-like protein hmp-1 (hmp-1) from Caenorhabditis elegans.